Reading from the N-terminus, the 414-residue chain is MDNNNHTFSSWLRSPAHHQWLALEGKRLLGFAKAAKLENGFGGLDDYGRLMVGATAGTMNTARMTHCFAMAHVQGIPGCAALIDHGIAALSGPLHDAEHGGWFSAALEDHGKTDKQAYLHAFVALAASSAVVAGRPAAQALLSDVIQVIQSRFWSDEEGAMRESFSQDWSDEEPYRGANSNMHSTEAFLALADVTGDAQWLDRALSIVERVIHQHAGANNFQVIEHFTSGWQPLPDYNRENPADGFRPFGTTPGHAFEWARLVLHLEAARRRAGRSNPDWLLDDARQLFANACRYGWDVDGAPGIVYTLDWQNKPVVRHRLHWTHCEAAAAAAALLQRTGEQQYEDWYRCFWEFNETLFIDIEHGSWRHELNERNEPSEDIWPGKPDLYHAYQATLLPVLPLAPSLASAMAGLD.

Residues H255 and H390 each act as proton donor/acceptor in the active site.

The protein belongs to the N-acylglucosamine 2-epimerase family. Monomer.

The enzyme catalyses D-mannose = D-fructose. With respect to regulation, strongly inhibited by Ag(2+), Cu(2+) and cetyltrimethyl ammonium bromide (CTAB). In terms of biological role, catalyzes the reversible isomerization of D-mannose to D-fructose. Shows high specific activity towards mannose and fructose, and has no detectable activity towards other monosaccharides and disaccharides. The chain is D-mannose isomerase from Pseudomonas cannabina pv. alisalensis.